A 559-amino-acid chain; its full sequence is Glycerol kinase (559 aa).

T20 contributes to the ADP binding site. ATP-binding residues include T20, S21, and S22. T20 serves as a coordination point for sn-glycerol 3-phosphate. Residue R24 coordinates ADP. Residues R94, E95, and Y148 each coordinate sn-glycerol 3-phosphate. Glycerol contacts are provided by R94, E95, and Y148. G252 is a beta-D-fructose 1,6-bisphosphate binding site. Position 265 (D265) interacts with sn-glycerol 3-phosphate. D265 and Q266 together coordinate glycerol. T287, G332, G433, and N437 together coordinate ADP. ATP contacts are provided by T287, G332, and G433. A helical transmembrane segment spans residues 532–552 (IFCSLPLGFFIVSSMVMLIGA).

It belongs to the FGGY kinase family. As to expression, widely expressed in fetal and adult tissues. In terms of tissue distribution, the sole isoform expressed in adult liver and kidney.

It localises to the mitochondrion outer membrane. The protein localises to the nucleus. Its subcellular location is the cytoplasm. The protein resides in the cytosol. It catalyses the reaction glycerol + ATP = sn-glycerol 3-phosphate + ADP + H(+). Its pathway is polyol metabolism; glycerol degradation via glycerol kinase pathway; sn-glycerol 3-phosphate from glycerol: step 1/1. With respect to regulation, potassium and magnesium-dependent. In terms of biological role, kinase that plays a key role in glycerol metabolism, catalyzing its phosphorylation to produce sn-glycerol 3-phosphate. Sn-glycerol 3-phosphate is a crucial intermediate in various metabolic pathways, such as the synthesis of glycerolipids and triglycerides, glycogenesis, glycolysis and gluconeogenesis. The sequence is that of Glycerol kinase from Homo sapiens (Human).